The primary structure comprises 105 residues: MKLLFEGLLVLVLIAFVVAEFESDAEKWEALITQERACKGEGVKGCYYEADDWCCKKTPCKCPAWSHERECRCTQPCNPSCRGKRALMVDPETHRMLSLHRLSEE.

The first 19 residues, 1 to 19 (MKLLFEGLLVLVLIAFVVA), serve as a signal peptide directing secretion. Positions 20 to 36 (EFESDAEKWEALITQER) are excised as a propeptide. Cystine bridges form between Cys-38–Cys-55, Cys-46–Cys-60, Cys-54–Cys-73, and Cys-62–Cys-71. Arg-82 is subject to Arginine amide. The propeptide occupies 86–105 (ALMVDPETHRMLSLHRLSEE).

The protein belongs to the neurotoxin 28 (Litx) family. As to expression, expressed by the venom gland.

The protein localises to the secreted. Its function is as follows. Toxin active against insects (S.frugiperda larvae). May act on sodium (Nav) or calcium (Cav) channels. The polypeptide is U1-sicaritoxin-Li1b (Loxosceles intermedia (Brown spider)).